Reading from the N-terminus, the 158-residue chain is Protein E6 (158 aa).

Zinc fingers lie at residues 32 to 68 (CVYCRRQLQRTEVYEFAFGDLNVVYRDGVPLAACQSC) and 105 to 141 (CMCCLKPLSPAEKLRHLNSKRRFHKIAGNFTGQCRHC). The PDZ-binding domain motif lies at 156-158 (TQV).

Belongs to the papillomaviridae E6 protein family. Forms homodimers. Interacts with ubiquitin-protein ligase UBE3A/E6-AP; this interaction stimulates UBE3A ubiquitin activity. Interacts with host BAK1.

It is found in the host cytoplasm. The protein localises to the host nucleus. Its function is as follows. Plays a major role in the induction and maintenance of cellular transformation. E6 associates with host UBE3A/E6-AP ubiquitin-protein ligase and modulates its activity. Protects host keratinocytes from apoptosis by mediating the degradation of host BAK1. May also inhibit host immune response. This chain is Protein E6, found in Homo sapiens (Human).